A 901-amino-acid chain; its full sequence is Nuclear factor of activated T-cells, cytoplasmic 4 (901 aa).

2 disordered regions span residues 15–179 (LVFG…LSSW) and 203–362 (NEAA…EDSV). A compositionally biased stretch (pro residues) spans 61-81 (IPRPPPPRPGMHSPPPRPAPS). The span at 96–109 (GGPGGNAGGAGGGR) shows a compositional bias: gly residues. The segment at 114–119 (PSIRIT) is calcineurin-binding. Low complexity predominate over residues 114 to 123 (PSIRITSISP). A compositionally biased stretch (gly residues) spans 151–165 (GFGGYREAGGQGGGA). A compositionally biased stretch (low complexity) spans 166–179 (FFSPSPGSSSLSSW). A phosphoserine; by MAPK7 and MAPK14 mark is found at Ser168 and Ser170. Ser213 and Ser217 each carry phosphoserine; by MAPK8 and MAPK9. One copy of the SP 1 repeat lies at 213-229 (SPLPSPRASPRPWTPED). The tract at residues 213-293 (SPLPSPRASP…LSRRGSLGEE (81 aa)) is 2 approximate SP repeats. Pro residues-rich tracts occupy residues 215-227 (LPSP…PWTP) and 254-263 (GPVPASPRPA). Positions 268-270 (KRR) match the Nuclear localization signal motif. Over residues 272 to 288 (SSSGTPSSASPALSRRG) the composition is skewed to low complexity. One copy of the SP 2; approximate repeat lies at 277 to 293 (PSSASPALSRRGSLGEE). Ser289 is subject to Phosphoserine. The residue at position 334 (Ser334) is a Phosphoserine; by RPS6KA3. Ser344 carries the post-translational modification Phosphoserine. Residues 401–582 (SALPPLDWPL…VPIECSQRSA (182 aa)) form the RHD domain. A DNA-binding region spans residues 430 to 437 (RAHYETEG). Residues 586–683 (PQVETYSPSA…KRSPTQSFKF (98 aa)) enclose the IPT/TIG domain. Positions 672–674 (RRK) match the Nuclear localization signal motif. Lys689 is covalently cross-linked (Glycyl lysine isopeptide (Lys-Gly) (interchain with G-Cter in SUMO2)). Disordered regions lie at residues 695–721 (DSSL…PRPP) and 827–869 (PQSA…FRDS).

In terms of assembly, member of the multicomponent NFATC transcription complex that consists of at least two components, a pre-existing cytoplasmic component NFATC2 and an inducible nuclear component NFATC1. Other NFAT proteins, such as NFATC3, or members of the activating protein-1 (AP-1) family and MAF can also bind the complex. NFAT proteins can bind DNA as monomers or dimers. Component of a promoter-binding complex composed of STAT3, NFATC3 and NFATC4; complex formation is enhanced by calcineurin. Interacts with CREBBP; this interaction potentiates transcription activation. Interacts with MAPK8/JNK1 and MAPK9/JNK2. Interacts with GATA4 (via the second Zn finger). Interacts (via N-terminus) with IRAK1 (via C-terminus). Interacts with RPS6KA3. Interacts with HOMER1, HOMER2 and HOMER3; this interaction competes with calcineurin/PPP3CA-binding and hence prevents NFATC4 dephosphorylation and activation. Interacts with ESR1 and ESR2; this interaction decreases NFATC4 transcriptional activity. Interacts with MTOR and MAPK7/ERK5. Interacts with TRIM17; this interaction prevents NFATC3 nuclear localization. Interacts with TCF25 (via C-terminus); the interaction leads to suppression of NFATC4 transcription factor activity and is reduced following stimulation with angiotensin-2. Post-translationally, phosphorylated by NFATC-kinases; dephosphorylated by calcineurin/PPP3CA. Phosphorylated on Ser-168 and Ser-170 by MTOR, IRAK1, MAPK7/ERK5 and MAPK14/p38, on Ser-213 and Ser-217 by MAPK8 and MAPK9, and on Ser-289 and Ser-344 by RPS6KA3. Phosphorylated by GSK3B. Phosphorylation by GSK3B markedly increases NFATC4 ubiquitination. Phosphorylation by MAPK8/JNK1, MAPK9/JNK2 and RPS6KA3 may stimulate NFATC4 transcriptional activity. Phosphorylation at Ser-168 and Ser-170 is stimulated by UV irradiation. In terms of processing, ubiquitinated, leading to degradation by the proteasome. Ubiquitination may be stimulated by GSK3B-dependent phosphorylation. Polyubiquitin linkage mainly occurs through 'Lys-48'. As to expression, widely expressed. In the brain, expressed in neurons. Expressed in the hippocampus (at protein level). In the hippocampus, expressed in both the CA1-CA3 pyramidal cells and the dentate gyrus granular cells. Expressed in a subset of hippocampal cells representing adult-born neurons (at protein level). Expressed in the submandibular gland (at protein level). In the olfactory system, expressed at low levels in the glomerular and granular layers and in the mitral cell layer. In the cerebellum, expressed at moderate levels in granular neurons. Expressed at moderate levels in the choroid plexus and ependymal cells. Expressed in neurons of the cochlear nucleus (at protein level). Expressed at low levels in the heart (at protein level). Expressed in ventricular cardiomyocytes (at protein level). Expressed in the lung.

The protein localises to the cytoplasm. The protein resides in the nucleus. Functionally, ca(2+)-regulated transcription factor that is involved in several processes, including the development and function of the immune, cardiovascular, musculoskeletal, and nervous systems. Involved in T-cell activation, stimulating the transcription of cytokine genes, including that of IL2 and IL4. Following JAK/STAT signaling activation and as part of a complex with NFATC3 and STAT3, binds to the alpha-beta E4 promoter region of CRYAB and activates transcription in cardiomyocytes. Along with NFATC3, involved in embryonic heart development. Involved in mitochondrial energy metabolism required for cardiac morphogenesis and function. Transactivates many genes involved in heart physiology. Along with GATA4, binds to and activates NPPB/BNP promoter. Activates NPPA/ANP/ANF and MYH7/beta-MHC transcription. Binds to and transactivates AGTR2 gene promoter. Involved in the regulation of adult hippocampal neurogenesis. Involved in BDNF-driven pro-survival signaling in hippocampal adult-born neurons. Involved in the formation of long-term spatial memory and long-term potentiation. In cochlear nucleus neurons, may play a role in deafferentation-induced apoptosis during a developmental critical period when auditory neurons depend on afferent input for survival. Binds to and activates the BACE1/Beta-secretase 1 promoter, hence may regulate the proteolytic processing of the amyloid precursor protein (APP). Plays a role in adipocyte differentiation. May be involved in myoblast differentiation into myotubes. Binds the consensus DNA sequence 5'-GGAAAAT-3'. In the presence of CREBBP, activates TNF transcription. Binds to PPARG gene promoter and regulates its activity. Binds to PPARG and REG3G gene promoters. This chain is Nuclear factor of activated T-cells, cytoplasmic 4, found in Mus musculus (Mouse).